Reading from the N-terminus, the 793-residue chain is Transcription factor castor (793 aa).

Residues 44–53 (NEDISSSTSV) are compositionally biased toward polar residues. Disordered stretches follow at residues 44–101 (NEDI…NLIA), 199–259 (VTST…HTNA), and 272–296 (LEST…DSSY). Composition is skewed to low complexity over residues 54–68 (QQQQ…QQPQ), 81–98 (SSQN…PNSN), and 210–221 (ATPAPSAGATAG). T211 is modified (phosphothreonine). S215 is modified (phosphoserine). Residues 233 to 242 (ESADDDEDDD) are compositionally biased toward acidic residues. A compositionally biased stretch (low complexity) spans 245-254 (LSSLTSCSSS). A compositionally biased stretch (polar residues) spans 273–284 (ESTTDSLDSPSM). Residues 377 to 402 (FHCHEEPCQGKILSKKDDIIRHLKWH) form a C2H2-type 1; atypical zinc finger. C2H2-type zinc fingers lie at residues 439-463 (YHCV…ANFH), 498-522 (YHCC…KTYH), and 556-580 (IHCV…KRKH). The segment at 599-682 (EESSLDAMPQ…RLKVEDESSN (84 aa)) is disordered. The span at 608 to 629 (QQQQQQQQQQPTSLSQSQSSSS) shows a compositional bias: low complexity. Polar residues predominate over residues 630–644 (VCGGSNTSTPLSSLS). A DNA-binding region (a.T hook) is located at residues 650–662 (ARKRGRPPKKIQL).

In terms of tissue distribution, expressed in a specific subset of neuroblasts in the ventral nerve cord and the procephalic region in the embryo. Expressed in many, if not all, late delaminating NBs, and in early NBs, but only after they have undergone several rounds of ganglion mother cell-producing divisions.

The protein localises to the nucleus. Transcription factor that specifies expression of key genes in developing central nervous system (CNS). Essential for many, if not all, late developing neuroblastoma (NB) sublineages. Binds to the 5'-[CG]C[CT][CT]AAAAA[AT]-3' DNA sequence, like hb, suggesting that cas and hb act as a late regulators in early and late CNS NB sublineage, respectively. Acts by repressing expression of nub/pdm-1 and pdm2/pdm-2 POU genes, and restrict their pattern of expression in appropriate cells. Required for a full expression of vvl/drifter and acj6/I-POU; it is however unknown whether it directly activates these genes. Controls engrailed (en) expression in the ventral nerve cord. In Drosophila melanogaster (Fruit fly), this protein is Transcription factor castor (cas).